We begin with the raw amino-acid sequence, 233 residues long: Large ribosomal subunit protein uL1 (233 aa).

The protein belongs to the universal ribosomal protein uL1 family. In terms of assembly, part of the 50S ribosomal subunit.

Its function is as follows. Binds directly to 23S rRNA. The L1 stalk is quite mobile in the ribosome, and is involved in E site tRNA release. Functionally, protein L1 is also a translational repressor protein, it controls the translation of the L11 operon by binding to its mRNA. The polypeptide is Large ribosomal subunit protein uL1 (Paracoccus denitrificans (strain Pd 1222)).